The sequence spans 647 residues: Spindle pole body-associated protein VIK1 (647 aa).

Residues 36–51 (NTTNTMNGSRPSSMKS) are compositionally biased toward polar residues. A disordered region spans residues 36–55 (NTTNTMNGSRPSSMKSSLAL). Positions 202–350 (DHEITEEISQ…SKQEKFYNDT (149 aa)) form a coiled coil.

In terms of assembly, interacts with KAR3; the interaction is direct.

The protein resides in the cytoplasm. It is found in the cytoskeleton. The protein localises to the microtubule organizing center. It localises to the spindle pole body. Its subcellular location is the nucleus. Its function is as follows. Together with the minus end-directed microtubule motor KAR3, plays a role in microtubule organization. Recruits KAR3 to microtubules, and together they may stabilize the polymers. The KAR3-VIK1 heterodimer cross-links anti-parallel microtubules. Targets and/or maintains KAR3 at the spindle pole body during vegetative growth. This Saccharomyces cerevisiae (strain ATCC 204508 / S288c) (Baker's yeast) protein is Spindle pole body-associated protein VIK1 (VIK1).